A 70-amino-acid chain; its full sequence is Sec-independent protein translocase protein TatA (70 aa).

The chain crosses the membrane as a helical span at residues 1 to 21 (MFGLGGQELILILLIILLLFG). Positions 50 to 62 (FNKVVDEPPRKTP) are enriched in basic and acidic residues. Positions 50-70 (FNKVVDEPPRKTPENSTGSKS) are disordered.

The protein belongs to the TatA/E family. In terms of assembly, forms a complex with TatC.

It localises to the cell inner membrane. Its function is as follows. Part of the twin-arginine translocation (Tat) system that transports large folded proteins containing a characteristic twin-arginine motif in their signal peptide across membranes. TatA could form the protein-conducting channel of the Tat system. This chain is Sec-independent protein translocase protein TatA, found in Chlorobium limicola (strain DSM 245 / NBRC 103803 / 6330).